The sequence spans 765 residues: Leucine-rich repeat and calponin homology domain-containing protein 2 (765 aa).

Disordered regions lie at residues 1 to 39 and 55 to 76; these read MAASQGGGGNSGGGGCGGGGSSGGCGTAGGGGGGAGGGG and LFGQPFPNGPPWNPGSLQPQHT. LRR repeat units follow at residues 89-110, 112-133, 135-156, 158-179, 180-201, 203-224, 226-248, 249-269, and 271-292; these read SSGILSLSGRKLRDFPGSGYDL, DTTQADLSRNRFTEIPSDVWLF, PLETLNLYHNCIKTIPEAIKNL, MLTYLNISRNLLSTLPKYLFDL, PLKVLVVSNNKLVSIPEEIGKL, DLMELDISCNEIQVLPQQMGKL, SLRELNIRRNNLHVLPDELGDLP, LVKLDFSCNKVTEIPVCYRKL, and HLQVIILDNNPLQVPPAQICLK. The segment at 316–401 is disordered; that stretch reads LDLPSLSKRM…GSKTDSQKDQ (86 aa). Over residues 378-388 the composition is skewed to basic and acidic residues; it reads SNREQTSRNDS. Residues 438–472 are a coiled coil; the sequence is SEKSRKNEELGDEKRLEKEQLLAEEEDDDLKEVTD. Disordered stretches follow at residues 498 to 552 and 565 to 628; these read RNKP…QSEE and KYKS…EYGA. Basic and acidic residues predominate over residues 503 to 512; the sequence is QTVECEKSVS. 2 stretches are compositionally biased toward polar residues: residues 518–529 and 584–595; these read SPLSPLTWQPLE and DNANMSTQSPVS. Residues 642–755 form the Calponin-homology (CH) domain; the sequence is LREEREQIRQ…VTVQALLELP (114 aa).

Functionally, may play a role in the organization of the cytoskeleton. In Homo sapiens (Human), this protein is Leucine-rich repeat and calponin homology domain-containing protein 2 (LRCH2).